Reading from the N-terminus, the 1429-residue chain is Nitric oxide synthase 1 (1429 aa).

Residues 1–200 (MEENTFGVQQ…LQDIGEHDEL (200 aa)) form an interaction with NOSIP region. The PDZ domain maps to 17-99 (SVRLFKRKVG…ETHVVLILRG (83 aa)). Disordered regions lie at residues 152 to 174 (VTGL…SVSQ), 214 to 255 (GSKA…DNDR), and 271 to 298 (NNPY…SRCP). Over residues 160 to 174 (QHAQGHGQGAGSVSQ) the composition is skewed to low complexity. An interaction with DYNLL1/PIN region spans residues 163–240 (QGHGQGAGSV…TGIQVDRDLD (78 aa)). The segment covering 226-243 (AEMKDTGIQVDRDLDGKS) has biased composition (basic and acidic residues). Ser-280 carries the post-translational modification Phosphoserine. Positions 280–294 (SPTSGKQSPTKNGSP) are enriched in polar residues. Ser-334 serves as a coordination point for (6R)-L-erythro-5,6,7,8-tetrahydrobiopterin. Cys-415 serves as a coordination point for heme b. Positions 478, 587, 588, and 592 each coordinate L-arginine. Val-677, Trp-678, and Phe-691 together coordinate (6R)-L-erythro-5,6,7,8-tetrahydrobiopterin. Residue Tyr-706 participates in heme b binding. The calmodulin-binding stretch occupies residues 725–745 (KRRAIGFKKLAEAVKFSAKLM). The 181-residue stretch at 755–935 (ATILYATETG…AFRTWAKKVF (181 aa)) folds into the Flavodoxin-like domain. The FMN site is built by Thr-761, Glu-762, Thr-763, Lys-765, Ser-766, Ser-807, Thr-808, and Gly-812. Residues Ser-847, Ser-857, and Ser-858 each carry the phosphoserine modification. Residues Ser-886, His-891, Cys-893, Glu-919, and Gln-923 each coordinate FMN. Positions 990 to 1237 (KRVSAARLLS…VRGAPSFHLP (248 aa)) constitute an FAD-binding FR-type domain. Arg-1010 is an NADP(+) binding site. Positions 1032, 1173, 1174, 1175, 1176, 1191, and 1193 each coordinate FAD. Residue Ser-1196 coordinates NADP(+). The FAD site is built by Tyr-1197, Val-1210, Cys-1211, and Ser-1212. Residues Thr-1251, Arg-1284, Ser-1313, Arg-1314, Lys-1320, Tyr-1322, Gln-1324, Asp-1357, Thr-1398, and Arg-1400 each contribute to the NADP(+) site.

The protein belongs to the NOS family. In terms of assembly, homodimer. Interacts with DLG4 (via N-terminal tandem pair of PDZ domains); the interaction possibly being prevented by the association between NOS1 and CAPON. Forms a ternary complex with CAPON and RASD1. Forms a ternary complex with CAPON and SYN1. Interacts with ZDHHC23. Interacts with NOSIP; which may impair its synaptic location. Interacts with HTR4. Interacts with SLC6A4. Interacts with VAC14. Forms a complex with ASL, ASS1 and SLC7A1; the complex regulates cell-autonomous L-arginine synthesis and citrulline recycling while channeling extracellular L-arginine to nitric oxide synthesis pathway. Interacts with DMD; localizes NOS1 to sarcolemma in muscle cells. Interacts with DYNLL1; inhibits the nitric oxide synthase activity. Requires heme b as cofactor. The cofactor is FAD. FMN serves as cofactor. It depends on (6R)-L-erythro-5,6,7,8-tetrahydrobiopterin as a cofactor. Ubiquitinated; mediated by STUB1/CHIP in the presence of Hsp70 and Hsp40 (in vitro). In terms of tissue distribution, isoform N-NOS-1 is expressed in brain and colorectum. Found in the Auerbach's plexus of the enteric nervous system. Isoform PNNOS is expressed in the penis, urethra, prostate, and skeletal muscle, and coexists with the cerebellar nnos in the pelvic plexus, bladder and liver, and is detectable in the cerebellum.

Its subcellular location is the cell membrane. It is found in the sarcolemma. The protein localises to the cell projection. It localises to the dendritic spine. The enzyme catalyses 2 L-arginine + 3 NADPH + 4 O2 + H(+) = 2 L-citrulline + 2 nitric oxide + 3 NADP(+) + 4 H2O. Stimulated by calcium/calmodulin. Inhibited by DYNLL1 that prevents the dimerization of the protein. Inhibited by NOSIP. In terms of biological role, produces nitric oxide (NO) which is a messenger molecule with diverse functions throughout the body. In the brain and peripheral nervous system, NO displays many properties of a neurotransmitter. Inhibitory transmitter for non-adrenergic and non-cholinergic nerves in the colorectum. Probably has nitrosylase activity and mediates cysteine S-nitrosylation of cytoplasmic target proteins such SRR. Inhibitory transmitter for non-adrenergic and non-cholinergic nerves in the colorectum. The chain is Nitric oxide synthase 1 from Rattus norvegicus (Rat).